A 93-amino-acid polypeptide reads, in one-letter code: PqqA binding protein (93 aa).

Belongs to the PqqD family. As to quaternary structure, monomer. Interacts with PqqE.

It participates in cofactor biosynthesis; pyrroloquinoline quinone biosynthesis. Functions as a PqqA binding protein and presents PqqA to PqqE, in the pyrroloquinoline quinone (PQQ) biosynthetic pathway. The polypeptide is PqqA binding protein (Methylococcus capsulatus (strain ATCC 33009 / NCIMB 11132 / Bath)).